Here is a 349-residue protein sequence, read N- to C-terminus: MIEFDNLTYLHGKPQGTGLLKANPEDFVVVEDLGFEPDGEGEHILVRILKNGCNTRFVADALAKFLKIHAREVSFAGQKDKHAVTEQWLCARVPGKEMPDLSAFQLEGCQVLEYARHKRKLRLGALKGNAFTLVLREVSNRDDVEQRLIDICVKGVPNYFGAQRFGIGGSNLQGALRWAQTNTPVRDRNKRSFWLSAARSALFNQIVAERLKKADVNQVVDGDALQLAGRGSWFVATTEELAELQRRVNDKELMITAALPGSGEWGTQREALAFEKAAVAAETELQALLVREKVEAARRAMLLYPQQLSWNWWDDVTVEIRFWLPAGSFATSVVRELINTTGDYAHIAE.

A substrate-binding site is contributed by phenylalanine 27. Aspartate 80 acts as the Nucleophile in catalysis. Asparagine 129 is a binding site for substrate. The TRUD domain maps to 155–303; that stretch reads GVPNYFGAQR…VEAARRAMLL (149 aa). Residue phenylalanine 329 participates in substrate binding.

The protein belongs to the pseudouridine synthase TruD family.

It catalyses the reaction uridine(13) in tRNA = pseudouridine(13) in tRNA. In terms of biological role, responsible for synthesis of pseudouridine from uracil-13 in transfer RNAs. This Escherichia coli (strain SE11) protein is tRNA pseudouridine synthase D.